We begin with the raw amino-acid sequence, 484 residues long: Ribosome biogenesis protein NOP53 (484 aa).

Disordered stretches follow at residues 1 to 51 and 304 to 356; these read MAAG…WRRL and ESDG…AARK. N-acetylalanine is present on alanine 2. Serine 29 bears the Phosphoserine mark. Positions 35–49 are enriched in basic residues; sequence RRRRRGPRNKKRGWR. The segment at 148–437 is mediates interaction with CDKN2A/isoform tumor suppressor ARF; sequence KEELWEKLAK…SELSGSLRTL (290 aa). Position 305 is a phosphoserine (serine 305). A compositionally biased stretch (basic and acidic residues) spans 336-348; it reads PEKRMEKKTEQQR. Positions 348–392 are mediates interaction with human herpesvirus 8 protein ORF16; that stretch reads RRREKAARKLRVQQAALRAARLQHQELFRLRGIKAQVARRLAELA. Nucleolar localization signal stretches follow at residues 353-401 and 402-484; these read AARK…RRIR and RLAE…EIQL.

This sequence belongs to the NOP53 family. In terms of assembly, homooligomer. Interacts with PTEN; regulates PTEN phosphorylation and increases its stability. Interacts with RPL11; retains RPL11 into the nucleolus. Interacts with CDKN2A/isoform tumor suppressor ARF; the interaction is direct and promotes ARF nucleoplasmic relocalization and ubiquitin-mediated proteasomal degradation. Interacts with NPM1; the interaction is direct and competitive with MYC. Interacts with NF2 (via FERM domain); the interaction is direct. Interacts with p53/TP53 (via the oligomerization region); the interaction is direct and may prevent the MDM2-mediated proteasomal degradation of p53/TP53. Interacts with RIGI; may regulate RIGI through USP15-mediated 'Lys-63'-linked deubiquitination. Interacts with UBTF. Post-translationally, ubiquitin-mediated proteasomal degradation is regulated by c-JUN. It is associated with relocalization to the nucleoplasm and decreased homooligomerization. Phosphorylated upon DNA damage probably by ATM and DNA-PK; may regulate NOP53 degradation.

It is found in the nucleus. It localises to the nucleolus. The protein localises to the nucleoplasm. Nucleolar protein which is involved in the integration of the 5S RNP into the ribosomal large subunit during ribosome biogenesis. In ribosome biogenesis, may also play a role in rRNA transcription. Also functions as a nucleolar sensor that regulates the activation of p53/TP53 in response to ribosome biogenesis perturbation, DNA damage and other stress conditions. DNA damage or perturbation of ribosome biogenesis disrupt the interaction between NOP53 and RPL11 allowing RPL11 transport to the nucleoplasm where it can inhibit MDM2 and allow p53/TP53 activation. It may also positively regulate the function of p53/TP53 in cell cycle arrest and apoptosis through direct interaction, preventing its MDM2-dependent ubiquitin-mediated proteasomal degradation. Originally identified as a tumor suppressor, it may also play a role in cell proliferation and apoptosis by positively regulating the stability of PTEN, thereby antagonizing the PI3K-AKT/PKB signaling pathway. May also inhibit cell proliferation and increase apoptosis through its interaction with NF2. May negatively regulate NPM1 by regulating its nucleoplasmic localization, oligomerization and ubiquitin-mediated proteasomal degradation. Thereby, may prevent NPM1 interaction with MYC and negatively regulate transcription mediated by the MYC-NPM1 complex. May also regulate cellular aerobic respiration. In the cellular response to viral infection, may play a role in the attenuation of interferon-beta through the inhibition of RIGI. This chain is Ribosome biogenesis protein NOP53, found in Mus musculus (Mouse).